The following is a 185-amino-acid chain: Shikimate kinase (185 aa).

21-26 provides a ligand contact to ATP; it reads GVGKTT. Threonine 25 serves as a coordination point for Mg(2+). Residues aspartate 43, arginine 67, and glycine 90 each coordinate substrate. Residue arginine 129 coordinates ATP. Arginine 147 provides a ligand contact to substrate.

This sequence belongs to the shikimate kinase family. Monomer. It depends on Mg(2+) as a cofactor.

The protein resides in the cytoplasm. The catalysed reaction is shikimate + ATP = 3-phosphoshikimate + ADP + H(+). It functions in the pathway metabolic intermediate biosynthesis; chorismate biosynthesis; chorismate from D-erythrose 4-phosphate and phosphoenolpyruvate: step 5/7. Catalyzes the specific phosphorylation of the 3-hydroxyl group of shikimic acid using ATP as a cosubstrate. The polypeptide is Shikimate kinase (Bacillus pumilus (strain SAFR-032)).